Reading from the N-terminus, the 470-residue chain is Sulfate adenylyltransferase subunit 1 (470 aa).

A tr-type G domain is found at 22-238 (KELLRFITCG…ETIKIDYAYT (217 aa)). A G1 region spans residues 31–38 (GSVDDGKS). 31–38 (GSVDDGKS) provides a ligand contact to GTP. The segment at 89 to 93 (GITID) is G2. The segment at 110-113 (DTPG) is G3. GTP contacts are provided by residues 110-114 (DTPGH) and 165-168 (NKMD). The interval 165 to 168 (NKMD) is G4. The interval 202-204 (SAL) is G5.

The protein belongs to the TRAFAC class translation factor GTPase superfamily. Classic translation factor GTPase family. CysN/NodQ subfamily. In terms of assembly, heterodimer composed of CysD, the smaller subunit, and CysN.

It catalyses the reaction sulfate + ATP + H(+) = adenosine 5'-phosphosulfate + diphosphate. Its pathway is sulfur metabolism; hydrogen sulfide biosynthesis; sulfite from sulfate: step 1/3. In terms of biological role, with CysD forms the ATP sulfurylase (ATPS) that catalyzes the adenylation of sulfate producing adenosine 5'-phosphosulfate (APS) and diphosphate, the first enzymatic step in sulfur assimilation pathway. APS synthesis involves the formation of a high-energy phosphoric-sulfuric acid anhydride bond driven by GTP hydrolysis by CysN coupled to ATP hydrolysis by CysD. The protein is Sulfate adenylyltransferase subunit 1 of Francisella tularensis subsp. tularensis (strain SCHU S4 / Schu 4).